Reading from the N-terminus, the 472-residue chain is Maintenance of mitochondrial morphology protein 1 (472 aa).

Over 1–22 (MAFQQGEAAPVSTQSSLSFTQG) the chain is Lumenal. A helical membrane pass occupies residues 23–43 (FLLGQLSVVLLIGAFIKFFIF). At 44–472 (GEAPPPPSRG…GSMPEAPGAQ (429 aa)) the chain is on the cytoplasmic side. 3 disordered regions span residues 51 to 92 (SRGL…VPSS), 270 to 303 (LHTPSPMPSPPTAGAQPAAGAQPTDGGDIPPKSS), and 370 to 472 (RMGR…PGAQ). The segment covering 81 to 92 (STSNVLRPVPSS) has biased composition (polar residues). Residues 124 to 365 (QPESLDWFNV…EPRVQVVGLP (242 aa)) form the SMP-LTD domain. Positions 270-280 (LHTPSPMPSPP) are enriched in pro residues. The segment covering 281–297 (TAGAQPAAGAQPTDGGD) has biased composition (low complexity). The span at 450-460 (TRERSLGDDFH) shows a compositional bias: basic and acidic residues.

It belongs to the MMM1 family. Homodimer. Component of the ER-mitochondria encounter structure (ERMES) or MDM complex, composed of mmm1, mdm10, mdm12 and mdm34. A mmm1 homodimer associates with one molecule of mdm12 on each side in a pairwise head-to-tail manner, and the SMP-LTD domains of mmm1 and mdm12 generate a continuous hydrophobic tunnel for phospholipid trafficking.

It localises to the endoplasmic reticulum membrane. Functionally, component of the ERMES/MDM complex, which serves as a molecular tether to connect the endoplasmic reticulum (ER) and mitochondria. Components of this complex are involved in the control of mitochondrial shape and protein biogenesis, and function in nonvesicular lipid trafficking between the ER and mitochondria. The mdm12-mmm1 subcomplex functions in the major beta-barrel assembly pathway that is responsible for biogenesis of all outer membrane beta-barrel proteins, and acts in a late step after the SAM complex. The mdm10-mdm12-mmm1 subcomplex further acts in the TOM40-specific pathway after the action of the mdm12-mmm1 complex. Essential for establishing and maintaining the structure of mitochondria and maintenance of mtDNA nucleoids. The sequence is that of Maintenance of mitochondrial morphology protein 1 from Emericella nidulans (strain FGSC A4 / ATCC 38163 / CBS 112.46 / NRRL 194 / M139) (Aspergillus nidulans).